Reading from the N-terminus, the 145-residue chain is Ribonuclease H (145 aa).

One can recognise an RNase H type-1 domain in the interval Met1–Ala142. The Mg(2+) site is built by Asp10, Glu48, Asp70, and Asp134.

This sequence belongs to the RNase H family. As to quaternary structure, monomer. Mg(2+) is required as a cofactor.

It is found in the cytoplasm. The catalysed reaction is Endonucleolytic cleavage to 5'-phosphomonoester.. In terms of biological role, endonuclease that specifically degrades the RNA of RNA-DNA hybrids. The protein is Ribonuclease H of Neisseria meningitidis serogroup C / serotype 2a (strain ATCC 700532 / DSM 15464 / FAM18).